An 84-amino-acid polypeptide reads, in one-letter code: MKVTLIAILTCAAVLVLHTTAAEELEESQLMEVGMPDTELAAVDEERLFECSVSCEIEKEGNKDCKKKKCKGGWKCKFNICVKV.

The N-terminal stretch at 1 to 22 (MKVTLIAILTCAAVLVLHTTAA) is a signal peptide. Positions 23–47 (EELEESQLMEVGMPDTELAAVDEER) are excised as a propeptide. Disulfide bonds link Cys51-Cys65, Cys55-Cys76, and Cys70-Cys81.

The protein belongs to the neurotoxin 12 (Hwtx-2) family. 02 (Hwtx-2) subfamily. In terms of tissue distribution, expressed by the venom gland.

It localises to the secreted. In terms of biological role, postsynaptic neurotoxin. This Cyriopagopus hainanus (Chinese bird spider) protein is U4-theraphotoxin-Hhn1ac.